We begin with the raw amino-acid sequence, 247 residues long: Triosephosphate isomerase (247 aa).

Positions 10 and 12 each coordinate substrate. Residue His94 is the Electrophile of the active site. Glu164 (proton acceptor) is an active-site residue.

It belongs to the triosephosphate isomerase family. Homodimer.

It localises to the cytoplasm. The catalysed reaction is D-glyceraldehyde 3-phosphate = dihydroxyacetone phosphate. It catalyses the reaction dihydroxyacetone phosphate = methylglyoxal + phosphate. It participates in carbohydrate biosynthesis; gluconeogenesis. Its pathway is carbohydrate degradation; glycolysis; D-glyceraldehyde 3-phosphate from glycerone phosphate: step 1/1. Functionally, triosephosphate isomerase is an extremely efficient metabolic enzyme that catalyzes the interconversion between dihydroxyacetone phosphate (DHAP) and D-glyceraldehyde-3-phosphate (G3P) in glycolysis and gluconeogenesis. In terms of biological role, it is also responsible for the non-negligible production of methylglyoxal a reactive cytotoxic side-product that modifies and can alter proteins, DNA and lipids. The protein is Triosephosphate isomerase of Latimeria chalumnae (Coelacanth).